The primary structure comprises 88 residues: Chaplin-F (88 aa).

Residues 1–36 (MYNPKEHFSMSRIAKGLALTSVAAAAVAGTAGVAAA) form the signal peptide. In terms of domain architecture, Chaplin spans 47-87 (SPGVLSGNVVQVPVHIPVNVCGNTIDVIGLLNPAFGNECEN). An intrachain disulfide couples Cys-67 to Cys-85.

It belongs to the chaplin family. Short chaplin subfamily. Homodimer; disulfide linked. About 20% of ChpF isolated from cell wall forms disulfide-bonded homodimers.

It localises to the cell surface. Its subcellular location is the secreted. The protein resides in the cell wall. It is found in the fimbrium. In terms of biological role, one of 8 partially redundant surface-active proteins required for efficient formation of aerial mycelium; the short chaplins assemble into a hydrophobic, amyloidal fibrillar surface layer that envelopes and protects aerial hyphae and spores, presumably anchored to the long chaplins. Chaplins have an overlapping function with the surface-active SapB peptide; chaplins are essential on minimal medium while on rich medium both chaplins and SapB are required for efficient aerial hyphae formation. Chaplins are also involved in cell attachment to a hydrophobic surface. Forms amyloid fibrils in vitro probably composed of stacked beta-sheets, at low extracellular concentrations individually restores the ability to form aerial hyphae to a chaplin-deficient strain. A small chaplin extract (ChpD, ChpE, ChpF, ChpG and ChpH) self-assembles into 2 different amyloids; small fibrils at the air-water interface form an amphipathic membrane that resembles spore-surface structures involved in aerial hyphae formation, and hydrophilic fibrils in solution that resemble the fibers that attach cells to a hydrophobic surface. At the air-water interface the hydrophilic surface is in contact with water (probably equivalent to the peptidoglycan layer), while the hydrophobic face is exposed to the air, making the surface of the aerial hyphae hydrophobic. A small chaplin extract applied to a chaplin-deficient strain restores aerial hyphae formation. The small chaplin extract forms an amyloid-like structure similar to that seen on the surface of cells without rodlets (rdlA-rdlB deletions), and is highly surface active, reducing surface tension from 72 to 26 mJ/m(2), which probably allows escape of hyphae from an aqueous environment into air. ChpF alone is less surface active at pH 3.0 than at pH 10.0, it reduces the surface tension of water from 72.8 mN/m to 50 mN/m at pH 3.0 or to 37 mN/m at pH 10.0. ChpF and ChpG are sufficient to restore the rodlet layer and hydrophobicity to a strain deleted for the other 6 chaplin genes. This chain is Chaplin-F, found in Streptomyces coelicolor (strain ATCC BAA-471 / A3(2) / M145).